Reading from the N-terminus, the 464-residue chain is tRNA modification GTPase MnmE (464 aa).

Arg26, Glu92, and Arg131 together coordinate (6S)-5-formyl-5,6,7,8-tetrahydrofolate. A TrmE-type G domain is found at Gly227–Ser385. Residue Asn237 coordinates K(+). Residues Asn237–Ser242, Ser256–Thr262, and Asp281–Gly284 each bind GTP. Ser241 provides a ligand contact to Mg(2+). 3 residues coordinate K(+): Ser256, Ile258, and Thr261. A Mg(2+)-binding site is contributed by Thr262. Lys464 lines the (6S)-5-formyl-5,6,7,8-tetrahydrofolate pocket.

Belongs to the TRAFAC class TrmE-Era-EngA-EngB-Septin-like GTPase superfamily. TrmE GTPase family. As to quaternary structure, homodimer. Heterotetramer of two MnmE and two MnmG subunits. Requires K(+) as cofactor.

It is found in the cytoplasm. Exhibits a very high intrinsic GTPase hydrolysis rate. Involved in the addition of a carboxymethylaminomethyl (cmnm) group at the wobble position (U34) of certain tRNAs, forming tRNA-cmnm(5)s(2)U34. In Brachyspira hyodysenteriae (strain ATCC 49526 / WA1), this protein is tRNA modification GTPase MnmE.